Reading from the N-terminus, the 376-residue chain is Drebrin-like protein B (376 aa).

The region spanning 2 to 133 (SVNLSKNGAA…EPESIMEKVA (132 aa)) is the ADF-H domain. Residues 175–231 (KENFWAKAEKDEEERRIEEHRRANVEKDRLERERKEREQREAEERERRFRERSKEID) are a coiled coil. Residues 202–242 (DRLERERKEREQREAEERERRFRERSKEIDGHRKQQEEVEK) are compositionally biased toward basic and acidic residues. The segment at 202-288 (DRLERERKER…FTASQQEEEN (87 aa)) is disordered. Residues 268-283 (ESGSVSAQPEQFTASQ) are compositionally biased toward polar residues. The SH3 domain occupies 317–376 (DSGMCARALYDYQAADDTEISFDPDDVIIQIEMIDDGWWRGVAPSGHFGMFPANYVELLE).

Belongs to the ABP1 family.

It localises to the cytoplasm. It is found in the cytoskeleton. The protein localises to the cell projection. Its subcellular location is the lamellipodium. The protein resides in the ruffle. It localises to the cell cortex. It is found in the cytosol. The protein localises to the synapse. Its subcellular location is the perikaryon. The protein resides in the neuron projection. It localises to the cell membrane. It is found in the cytoplasmic vesicle. The protein localises to the clathrin-coated vesicle membrane. Its subcellular location is the golgi apparatus membrane. The protein resides in the podosome. It localises to the early endosome. It is found in the dendrite. The protein localises to the postsynaptic density. Adapter protein that binds F-actin and dynamin, and thereby plays a role in receptor-mediated endocytosis. Plays a role in the reorganization of the actin cytoskeleton, formation of cell projections, such as neurites, in neuron morphogenesis and synapse formation. Does not bind G-actin and promote actin polymerization by itself, but excerts its functions by interaction with other proteins. Required for the formation of organized podosome rosettes. This is Drebrin-like protein B (dbnl-b) from Xenopus laevis (African clawed frog).